We begin with the raw amino-acid sequence, 778 residues long: MSFVIAVPEALTMAASDLANIGSTINAANAAAALPTTGVVAAAADEVSAALAALFGSYAQSYHAFGAQLSAFHAQFVQSLTNGARSYVVAEATSAAPLQDLLGVVNAPAQALLGRPLIGNGANGADGTGAPGGPGGLLLGNGGNGGSGAPGQPGGAGGDAGLIGNGGTGGKGGDGLVGSGAAGGVGGRGGWLLGNGGTGGAGGAAGATLVGGTGGVGGATGLIGSGGFGGAGGAAAGVGTTGGVGGSGGVGGVFGNGGFGGAGGLGAAGGVGGTASYFGTGGGGGVGGDGAPGGDGGAGPLLIGNGGVGGLGGAGAAGGNGGAGGMLLGDGGAGGQGGPAVAGVLGGMPGAGGNGGNANWFGSGGAGGQGGTGLAGTNGVNPGSIANPNTGANGTDNSGNGNQTGGNGGPGPAGGVGEAGGVGGQGGLGESLDGNDGTGGKGGAGGTAGTDGGAGGAGGAGGIGETDGSAGGVATGGEGGDGATGGVDGGVGGAGGKGGQGHNTGVGDAFGGDGGIGGDGNGALGAAGGNGGTGGAGGNGGRGGMLIGNGGAGGAGGTGGTGGGGAAGFAGGVGGAGGEGLTDGAGTAEGGTGGLGGLGGVGGTGGMGGSGGVGGNGGAAGSLIGLGGGGGAGGVGGTGGIGGIGGAGGNGGAGGAGTTTGGGATIGGGGGTGGVGGAGGTGGTGGAGGTTGGSGGAGGLIGWAGAAGGTGAGGTGGQGGLGGQGGNGGNGGTGATGGQGGDFALGGNGGAGGAGGSPGGSSGIQGNMGPPGTQGADG.

Residues 1 to 92 (MSFVIAVPEA…GARSYVVAEA (92 aa)) enclose the PE domain. Disordered stretches follow at residues 125–163 (ADGT…AGLI), 372–510 (TGLA…GDAF), and 718–778 (QGGL…GADG). 3 stretches are compositionally biased toward gly residues: residues 402–429 (NQTG…GGLG), 436–510 (DGTG…GDAF), and 718–763 (QGGL…GSSG).

The protein belongs to the mycobacterial PE family. PGRS subfamily.

This is an uncharacterized protein from Mycobacterium tuberculosis (strain CDC 1551 / Oshkosh).